Here is a 144-residue protein sequence, read N- to C-terminus: Flagellar assembly factor FliW (144 aa).

Belongs to the FliW family. Interacts with translational regulator CsrA and flagellin(s).

The protein resides in the cytoplasm. Acts as an anti-CsrA protein, binds CsrA and prevents it from repressing translation of its target genes, one of which is flagellin. Binds to flagellin and participates in the assembly of the flagellum. The protein is Flagellar assembly factor FliW of Bacillus pumilus (strain SAFR-032).